A 282-amino-acid polypeptide reads, in one-letter code: Elongation factor Ts (282 aa).

Residues 79–82 (TDFV) form an involved in Mg(2+) ion dislocation from EF-Tu region.

This sequence belongs to the EF-Ts family.

It is found in the cytoplasm. In terms of biological role, associates with the EF-Tu.GDP complex and induces the exchange of GDP to GTP. It remains bound to the aminoacyl-tRNA.EF-Tu.GTP complex up to the GTP hydrolysis stage on the ribosome. This chain is Elongation factor Ts, found in Shewanella loihica (strain ATCC BAA-1088 / PV-4).